The following is a 240-amino-acid chain: Ribonuclease PH (240 aa).

Phosphate-binding positions include R86 and 124-126 (GTR).

Belongs to the RNase PH family. Homohexameric ring arranged as a trimer of dimers.

The enzyme catalyses tRNA(n+1) + phosphate = tRNA(n) + a ribonucleoside 5'-diphosphate. Functionally, phosphorolytic 3'-5' exoribonuclease that plays an important role in tRNA 3'-end maturation. Removes nucleotide residues following the 3'-CCA terminus of tRNAs; can also add nucleotides to the ends of RNA molecules by using nucleoside diphosphates as substrates, but this may not be physiologically important. Probably plays a role in initiation of 16S rRNA degradation (leading to ribosome degradation) during starvation. This is Ribonuclease PH from Mannheimia succiniciproducens (strain KCTC 0769BP / MBEL55E).